A 273-amino-acid polypeptide reads, in one-letter code: Multivesicular body subunit 12A (273 aa).

The region spanning 9-151 (GMPLAGLAWS…GFAIWCRKAK (143 aa)) is the MABP domain. Position 130 is a phosphothreonine (Thr130). Residues 154-186 (RPVPKPRALSRDVRDLSLDSPGQPSKGGFPERT) are disordered. The SH3-binding motif lies at 155-160 (PVPKPR). Ser163, Ser170, Ser195, and Ser202 each carry phosphoserine. The interval 192-273 (SRASTLRRND…AAARLPPSVS (82 aa)) is interaction with TSG101, VPS37B and VPS28. A Phosphotyrosine modification is found at Tyr204. Phosphoserine is present on Ser207. The region spanning 215–265 (MDGVPFTLHPRFEGKSCGPLAFSAFADLTIKSLADIEAEYNYGFVVEKTAA) is the UMA domain.

This sequence belongs to the MVB12 family. Component of the ESCRT-I complex (endosomal sorting complex required for transport I) which consists of TSG101, VPS28, a VPS37 protein (VPS37A to -D) and MVB12A or MVB12B in a 1:1:1:1 stoichiometry. Interacts with CD2AP and CIN85/SH3KBP1. Interacts with CD2AP (via one of the SH3 domains). Interacts with TSG101; the association appears to be mediated by the TSG101-VPS37 binary subcomplex. Interacts with VPS28. Interacts with VPS37B; the association appears to be mediated by the TSG101-VPS37 binary subcomplex. Interacts with VPS37C; the association appears to be mediated by the TSG101-VPS37 binary subcomplex. Interacts with VPS37D; the association appears to be mediated by the TSG101-VPS37 binary subcomplex. Interacts with CEP55. In terms of processing, phosphorylated on Tyr-204 upon EGF stimulation. Phosphorylation is required for interaction with CD2AP and CIN85/SH3KBP1.

The protein resides in the cytoplasm. The protein localises to the cytoskeleton. It localises to the nucleus. It is found in the endosome. Its subcellular location is the microtubule organizing center. The protein resides in the centrosome. The protein localises to the late endosome membrane. In terms of biological role, component of the ESCRT-I complex, a regulator of vesicular trafficking process. Required for the sorting of endocytic ubiquitinated cargos into multivesicular bodies. May be involved in the ligand-mediated internalization and down-regulation of EGF receptor. The sequence is that of Multivesicular body subunit 12A (MVB12A) from Bos taurus (Bovine).